A 756-amino-acid chain; its full sequence is Alpha-1,2-mannosyltransferase MNN26 (756 aa).

Residues 1–10 lie on the Cytoplasmic side of the membrane; sequence MSLRRLSPSH. Residues 11-31 form a helical membrane-spanning segment; it reads LILGTLVLGVIIFNLYVLTST. At 32–756 the chain is on the extracellular side; it reads HEDIKKVKGP…NGKNKQGAAS (725 aa). The span at 723–734 shows a compositional bias: polar residues; it reads LGEKSQPKQPEI. The segment at 723–756 is disordered; sequence LGEKSQPKQPEINNNNNNNNNDDDNGKNKQGAAS.

Belongs to the MNN1/MNT family.

It is found in the golgi apparatus membrane. The protein operates within protein modification; protein glycosylation. In terms of biological role, alpha-1,2-mannosyltransferase required for cell wall integrity. Responsible for addition of the first alpha-1,2-linked mannose to form the branches on the mannan backbone of oligosaccharides. Addition of alpha-1,2-mannose is required for stabilization of the alpha-1,6-mannose backbone and hence regulates mannan fibril length; and is important for both immune recognition and virulence. This Candida albicans (strain SC5314 / ATCC MYA-2876) (Yeast) protein is Alpha-1,2-mannosyltransferase MNN26 (MNN26).